Reading from the N-terminus, the 285-residue chain is MRGKHIFIITALISILMLSACGQKNGSATVATATDSTITKDNFEKQLKDRYGKDMLYEMMAQDVITKKYKVPDEEVNKEVEKVKKQYGDQFKKVLENYGLKDEEDFKNQIKFKLAMNEAIKKSITEKDVKDHYKPEIKASHILVSDENEAKEIKSKLDAGASFEELAKQESQDLLSKDKGGDLGYFNSGTMAPEFETAAYKLNVGQISNPVKSSNGYHVIKLTDKKALKPYDEVKDSIRKNLEEERTADPVFSKKLLQEELKKANIKINDSDLKDTFTLVSPQGN.

Residues 1 to 20 form the signal peptide; that stretch reads MRGKHIFIITALISILMLSA. Cysteine 21 is lipidated: N-palmitoyl cysteine. A lipid anchor (S-diacylglycerol cysteine) is attached at cysteine 21. The PpiC domain occupies 134 to 224; the sequence is KPEIKASHIL…NGYHVIKLTD (91 aa).

The protein belongs to the PrsA family.

Its subcellular location is the cell membrane. The catalysed reaction is [protein]-peptidylproline (omega=180) = [protein]-peptidylproline (omega=0). Its function is as follows. Plays a major role in protein secretion by helping the post-translocational extracellular folding of several secreted proteins. The protein is Foldase protein PrsA 2 (prsA2) of Bacillus cereus (strain ATCC 14579 / DSM 31 / CCUG 7414 / JCM 2152 / NBRC 15305 / NCIMB 9373 / NCTC 2599 / NRRL B-3711).